Consider the following 425-residue polypeptide: Serine hydroxymethyltransferase (425 aa).

Residues leucine 120 and 124 to 126 (GHL) each bind (6S)-5,6,7,8-tetrahydrofolate. Lysine 229 carries the post-translational modification N6-(pyridoxal phosphate)lysine. (6S)-5,6,7,8-tetrahydrofolate is bound at residue 353–355 (SPF).

It belongs to the SHMT family. Homodimer. Pyridoxal 5'-phosphate serves as cofactor.

The protein localises to the cytoplasm. It catalyses the reaction (6R)-5,10-methylene-5,6,7,8-tetrahydrofolate + glycine + H2O = (6S)-5,6,7,8-tetrahydrofolate + L-serine. It participates in one-carbon metabolism; tetrahydrofolate interconversion. Its pathway is amino-acid biosynthesis; glycine biosynthesis; glycine from L-serine: step 1/1. Its function is as follows. Catalyzes the reversible interconversion of serine and glycine with tetrahydrofolate (THF) serving as the one-carbon carrier. This reaction serves as the major source of one-carbon groups required for the biosynthesis of purines, thymidylate, methionine, and other important biomolecules. Also exhibits THF-independent aldolase activity toward beta-hydroxyamino acids, producing glycine and aldehydes, via a retro-aldol mechanism. The polypeptide is Serine hydroxymethyltransferase (Thermosynechococcus vestitus (strain NIES-2133 / IAM M-273 / BP-1)).